A 318-amino-acid chain; its full sequence is Porphobilinogen deaminase (318 aa).

Cysteine 241 bears the S-(dipyrrolylmethanemethyl)cysteine mark.

This sequence belongs to the HMBS family. As to quaternary structure, monomer. Dipyrromethane is required as a cofactor.

It carries out the reaction 4 porphobilinogen + H2O = hydroxymethylbilane + 4 NH4(+). It functions in the pathway porphyrin-containing compound metabolism; protoporphyrin-IX biosynthesis; coproporphyrinogen-III from 5-aminolevulinate: step 2/4. Its function is as follows. Tetrapolymerization of the monopyrrole PBG into the hydroxymethylbilane pre-uroporphyrinogen in several discrete steps. The chain is Porphobilinogen deaminase from Geotalea daltonii (strain DSM 22248 / JCM 15807 / FRC-32) (Geobacter daltonii).